The following is a 255-amino-acid chain: 2-(S)-hydroxypropyl-CoM dehydrogenase 3 (255 aa).

Residues Ile19, Asp38, 64 to 65 (DV), and Asn91 contribute to the NAD(+) site. Residues Ser143 and Tyr156 each contribute to the (S)-2-hydroxypropyl-coenzyme M site. Catalysis depends on Tyr156, which acts as the Proton acceptor. Lys160 provides a ligand contact to NAD(+). Residue Thr188 coordinates (S)-2-hydroxypropyl-coenzyme M. 189-193 (VTSTG) is an NAD(+) binding site. Tyr215 lines the (S)-2-hydroxypropyl-coenzyme M pocket.

Belongs to the short-chain dehydrogenases/reductases (SDR) family. In terms of assembly, homotetramer.

It catalyses the reaction (S)-2-hydroxypropyl-coenzyme M + NAD(+) = 2-oxopropyl-coenzyme M + NADH + H(+). With respect to regulation, not inhibited by 2-(2-methyl-2-hydroxypropylthio)ethanesulfonate (M-HPC), an achiral analog of both R-HPC and S-HPC. Its function is as follows. Involved in aliphatic epoxide carboxylation. Catalyzes the reversible oxidation of (2S)-2-hydroxypropyl-coenzyme M (S-HPC) to 2-oxopropyl-coenzyme M (2-KPC). The enzyme is highly specific for the S enantiomers. In vitro can also use the aliphatic ketone 2-butanone and the aliphatic alcohol 2-propanol, and shows an inherent stereoselectivity for 2-butanone reduction. In Xanthobacter autotrophicus (strain ATCC BAA-1158 / Py2), this protein is 2-(S)-hydroxypropyl-CoM dehydrogenase 3.